We begin with the raw amino-acid sequence, 138 residues long: ATP synthase epsilon chain 2 (138 aa).

This sequence belongs to the ATPase epsilon chain family. In terms of assembly, F-type ATPases have 2 components, CF(1) - the catalytic core - and CF(0) - the membrane proton channel. CF(1) has five subunits: alpha(3), beta(3), gamma(1), delta(1), epsilon(1). CF(0) has three main subunits: a, b and c.

Its subcellular location is the cell inner membrane. In terms of biological role, produces ATP from ADP in the presence of a proton gradient across the membrane. The protein is ATP synthase epsilon chain 2 of Syntrophotalea carbinolica (strain DSM 2380 / NBRC 103641 / GraBd1) (Pelobacter carbinolicus).